We begin with the raw amino-acid sequence, 486 residues long: LON peptidase N-terminal domain and RING finger protein C14F5.10c (486 aa).

The segment at 169–207 adopts an RING-type zinc-finger fold; it reads CQICFGMLYDPVVSPCGHTFCGPCLMQALTQSPQCPTCR. Residues 250 to 472 enclose the Lon N-terminal domain; sequence ESWLPLFISM…LVLIWLTQLQ (223 aa).

The polypeptide is LON peptidase N-terminal domain and RING finger protein C14F5.10c (Schizosaccharomyces pombe (strain 972 / ATCC 24843) (Fission yeast)).